The chain runs to 275 residues: uncharacterized protein (275 aa).

The 98-residue stretch at 171-268 (KMVCEFLEEH…GLTPKQYMKI (98 aa)) folds into the HTH araC/xylS-type domain. 2 DNA-binding regions (H-T-H motif) span residues 188–209 (NDLSELTGWSKYHLLRSFTKQK) and 235–258 (PIDAAFQTGFSDQSHMTKFFKRQV).

This is an uncharacterized protein from Bacillus subtilis (strain 168).